Consider the following 491-residue polypeptide: Arginine decarboxylase (491 aa).

At Lys227 the chain carries N6-(pyridoxal phosphate)lysine.

This sequence belongs to the Orn/Lys/Arg decarboxylase class-I family. The cofactor is pyridoxal 5'-phosphate.

Its subcellular location is the cytoplasm. The enzyme catalyses L-arginine + H(+) = agmatine + CO2. It functions in the pathway amine and polyamine biosynthesis; agmatine biosynthesis; agmatine from L-arginine: step 1/1. Catalyzes the formation of agmatine from arginine. This chain is Arginine decarboxylase (speA), found in Halalkalibacterium halodurans (strain ATCC BAA-125 / DSM 18197 / FERM 7344 / JCM 9153 / C-125) (Bacillus halodurans).